The chain runs to 263 residues: 3'-5' ssDNA/RNA exonuclease TatD (263 aa).

Positions 91, 127, and 152 each coordinate a divalent metal cation.

Belongs to the metallo-dependent hydrolases superfamily. TatD-type hydrolase family. TatD subfamily. Monomer. Mg(2+) is required as a cofactor.

It localises to the cytoplasm. 3'-5' exonuclease that prefers single-stranded DNA and RNA. May play a role in the H(2)O(2)-induced DNA damage repair. The chain is 3'-5' ssDNA/RNA exonuclease TatD from Cronobacter turicensis (strain DSM 18703 / CCUG 55852 / LMG 23827 / z3032).